The chain runs to 605 residues: Sorting nexin MVP1 (605 aa).

Disordered stretches follow at residues 113-147 and 175-213; these read PMDF…LDDH and EEQE…SGVW. Polar residues predominate over residues 123 to 138; it reads SSINFSASTTGRSQTP. Residues 180 to 193 are compositionally biased toward low complexity; the sequence is LQQSQLSQSQLSRS. Residues 226–343 enclose the PX domain; sequence ADSVTLAIVP…TFVTLRNDIS (118 aa). Positions 264, 266, 290, and 309 each coordinate a 1,2-diacyl-sn-glycero-3-phospho-(1D-myo-inositol-3-phosphate).

Belongs to the sorting nexin family.

The protein resides in the cytoplasm. The protein localises to the membrane. Functionally, required for vacuolar protein sorting. The sequence is that of Sorting nexin MVP1 (MVP1) from Yarrowia lipolytica (strain CLIB 122 / E 150) (Yeast).